A 476-amino-acid chain; its full sequence is Acidic leucine-rich nuclear phosphoprotein 32-related protein 1 (476 aa).

3 LRR repeats span residues 51-72, 73-92, and 98-119; these read SLEH…PRLR, NLTR…DHLV, and SLRD…SPLA. Positions 131-169 constitute an LRRCT domain; the sequence is CPVTRVKDYRSKVFGMIRTLKYLDKMDADENERPESDDD. A disordered region spans residues 157–476; sequence DADENERPES…VEDLRPFKHH (320 aa). 8 stretches are compositionally biased toward acidic residues: residues 165–194, 222–232, 252–289, 299–329, 353–371, 379–396, 415–436, and 458–467; these read ESDD…EDPG, DVDEDESDADE, GDED…EDAV, SDEE…EAEP, EGED…EERL, EGND…EDTE, DAAE…DDGG, and GDDDEDDDGV.

This sequence belongs to the ANP32 family.

This chain is Acidic leucine-rich nuclear phosphoprotein 32-related protein 1, found in Oryza sativa subsp. japonica (Rice).